The chain runs to 167 residues: UPF0598 protein CG30010 (167 aa).

It belongs to the UPF0598 family.

The chain is UPF0598 protein CG30010 from Drosophila melanogaster (Fruit fly).